Here is a 314-residue protein sequence, read N- to C-terminus: Dihydroorotate dehydrogenase (fumarate) (314 aa).

Residues Ala-21 and Lys-45–Ser-46 each bind FMN. Residues Lys-45, Asn-69 to Leu-73, and Asn-129 each bind substrate. Asn-129 provides a ligand contact to FMN. Residue Cys-132 is the Nucleophile of the active site. Asn-134 contacts substrate. Residues Lys-166 and Val-195 each contribute to the FMN site. Asn-196–Ser-197 is a substrate binding site. Residues Gly-224, Gly-251–Gly-252, and Gly-273–Thr-274 each bind FMN.

It belongs to the dihydroorotate dehydrogenase family. Type 1 subfamily. As to quaternary structure, homodimer. Requires FMN as cofactor.

Its subcellular location is the cytoplasm. It carries out the reaction (S)-dihydroorotate + fumarate = orotate + succinate. It functions in the pathway pyrimidine metabolism; UMP biosynthesis via de novo pathway. Its function is as follows. Catalyzes the conversion of dihydroorotate to orotate with fumarate as the electron acceptor. Molecular oxygen can replace fumarate in vitro. This chain is Dihydroorotate dehydrogenase (fumarate) (pyr4), found in Trypanosoma cruzi (strain CL Brener).